A 175-amino-acid chain; its full sequence is EKC/KEOPS complex subunit TPRKB (175 aa).

Belongs to the CGI121/TPRKB family. In terms of assembly, component of the EKC/KEOPS complex.

The protein resides in the cytoplasm. Its subcellular location is the cytosol. It localises to the nucleus. Component of the EKC/KEOPS complex that is required for the formation of a threonylcarbamoyl group on adenosine at position 37 (t(6)A37) in tRNAs that read codons beginning with adenine. The complex is probably involved in the transfer of the threonylcarbamoyl moiety of threonylcarbamoyl-AMP (TC-AMP) to the N6 group of A37. Tprkb acts as an allosteric effector that regulates the t(6)A activity of the complex. This chain is EKC/KEOPS complex subunit TPRKB, found in Danio rerio (Zebrafish).